Consider the following 120-residue polypeptide: Basic phospholipase A2 homolog LmutTX (120 aa).

Intrachain disulfides connect cysteine 26–cysteine 114, cysteine 28–cysteine 44, cysteine 43–cysteine 95, cysteine 49–cysteine 120, cysteine 50–cysteine 88, cysteine 57–cysteine 81, and cysteine 75–cysteine 86.

The protein belongs to the phospholipase A2 family. Group II subfamily. K49 sub-subfamily. As to quaternary structure, monomer. In terms of tissue distribution, expressed by the venom gland.

It is found in the secreted. Its function is as follows. Snake venom phospholipase A2 homolog that lacks enzymatic activity. Shows moderate cytotoxicity against C2C12 myotubes (activity above 200 ug/mL). Also shows antibacterial activity against both Gram-positive and Gram-negative bacteria. A model of myotoxic mechanism has been proposed: an apo Lys49-PLA2 is activated by the entrance of a hydrophobic molecule (e.g. fatty acid) at the hydrophobic channel of the protein leading to a reorientation of a monomer. This reorientation causes a transition between 'inactive' to 'active' states, causing alignment of C-terminal and membrane-docking sites (MDoS) side-by-side and putting the membrane-disruption sites (MDiS) in the same plane, exposed to solvent and in a symmetric position for both monomers. The MDoS region stabilizes the toxin on membrane by the interaction of charged residues with phospholipid head groups. Subsequently, the MDiS region destabilizes the membrane with penetration of hydrophobic residues. This insertion causes a disorganization of the membrane, allowing an uncontrolled influx of ions (i.e. calcium and sodium), and eventually triggering irreversible intracellular alterations and cell death. The protein is Basic phospholipase A2 homolog LmutTX of Lachesis muta muta (Bushmaster).